Reading from the N-terminus, the 449-residue chain is Glucose-6-phosphate isomerase (449 aa).

Residue Glu-291 is the Proton donor of the active site. Residues His-312 and Lys-426 contribute to the active site.

The protein belongs to the GPI family.

It localises to the cytoplasm. The enzyme catalyses alpha-D-glucose 6-phosphate = beta-D-fructose 6-phosphate. The protein operates within carbohydrate biosynthesis; gluconeogenesis. It participates in carbohydrate degradation; glycolysis; D-glyceraldehyde 3-phosphate and glycerone phosphate from D-glucose: step 2/4. Catalyzes the reversible isomerization of glucose-6-phosphate to fructose-6-phosphate. This chain is Glucose-6-phosphate isomerase, found in Enterococcus faecalis (strain ATCC 700802 / V583).